A 143-amino-acid chain; its full sequence is Large ribosomal subunit protein uL11 (143 aa).

It belongs to the universal ribosomal protein uL11 family. In terms of assembly, part of the ribosomal stalk of the 50S ribosomal subunit. Interacts with L10 and the large rRNA to form the base of the stalk. L10 forms an elongated spine to which L12 dimers bind in a sequential fashion forming a multimeric L10(L12)X complex. Post-translationally, one or more lysine residues are methylated.

In terms of biological role, forms part of the ribosomal stalk which helps the ribosome interact with GTP-bound translation factors. The chain is Large ribosomal subunit protein uL11 from Pseudomonas fluorescens (strain Pf0-1).